The primary structure comprises 566 residues: Chondroitin sulfate proteoglycan 5 (566 aa).

The signal sequence occupies residues 1–30; that stretch reads MGRAGGGGPGRGPPPLLLFLGAALVLASGA. At 31-423 the chain is on the extracellular side; that stretch reads VPAREAGSAV…SIITDFQVMC (393 aa). Residue Ser-38 is glycosylated (O-linked (Xyl...) (chondroitin sulfate) serine). A disordered region spans residues 39 to 82; the sequence is AVEAEELVKGSPAWEPPANDTREEAGPPAAGEDEASWTAPGGEL. Residue Asn-57 is glycosylated (N-linked (GlcNAc...) asparagine). A glycan (O-linked (Xyl...) (chondroitin sulfate) serine) is linked at Ser-117. Disordered stretches follow at residues 143-202, 215-248, and 262-354; these read IPEA…LEPQ, GLDG…TPSW, and ESDF…ASSE. O-linked (GalNAc...) serine glycosylation is present at Ser-165. The interval 264–301 is interaction with TNC and TNR; that stretch reads DFYPTTSFYDDLDEEEEEEEDDKDAVGGGDLEDENELL. Acidic residues predominate over residues 273–286; it reads DDLDEEEEEEEDDK. In terms of domain architecture, EGF-like spans 371–413; sequence RSVCDLFPSYCHNGGQCYLVENIGAFCRCNTQDYIWHKGMRCE. 3 disulfides stabilise this stretch: Cys-374-Cys-387, Cys-381-Cys-397, and Cys-399-Cys-412. The chain crosses the membrane as a helical span at residues 424 to 444; sequence VAVGSAALVLLLLFMMTVFFA. The tract at residues 442–460 is interaction with GOPC; it reads FFAKKLYLLKTENTKLRRT. Residues 445–566 lie on the Cytoplasmic side of the membrane; sequence KKLYLLKTEN…DVNCLQNNLT (122 aa). 4 positions are modified to phosphoserine: Ser-467, Ser-475, Ser-483, and Ser-543.

In terms of assembly, binds TNR and probably TNC. Interacts with ERBB3 and GOPC. Interacts with MDK; this interaction is independent of the presence of chondroitin sulfate chains and promotes elongation of oligodendroglial precursor-like cells. N-glycosylated. Post-translationally, O-glycosylated; contains chondroitin sulfate glycans. Part-time proteoglycan, expressed in part as a proteoglycan exhibiting chondroitin sulfate glycans and in part as a non-proteoglycan form. The relative amount of both forms depends on tissues and tissue maturation. In terms of processing, phosphorylated; in intracellular and extracellular parts. In terms of tissue distribution, detected in cerebrospinal fluid (at protein level). Detected in urine (at protein level). Expressed in brain (at protein level).

It localises to the cell membrane. Its subcellular location is the synaptic cell membrane. The protein resides in the endoplasmic reticulum membrane. The protein localises to the golgi apparatus membrane. It is found in the cell surface. It localises to the secreted. May function as a growth and differentiation factor involved in neuritogenesis. May induce ERBB3 activation. In Homo sapiens (Human), this protein is Chondroitin sulfate proteoglycan 5 (CSPG5).